We begin with the raw amino-acid sequence, 156 residues long: SsrA-binding protein (156 aa).

This sequence belongs to the SmpB family.

The protein resides in the cytoplasm. In terms of biological role, required for rescue of stalled ribosomes mediated by trans-translation. Binds to transfer-messenger RNA (tmRNA), required for stable association of tmRNA with ribosomes. tmRNA and SmpB together mimic tRNA shape, replacing the anticodon stem-loop with SmpB. tmRNA is encoded by the ssrA gene; the 2 termini fold to resemble tRNA(Ala) and it encodes a 'tag peptide', a short internal open reading frame. During trans-translation Ala-aminoacylated tmRNA acts like a tRNA, entering the A-site of stalled ribosomes, displacing the stalled mRNA. The ribosome then switches to translate the ORF on the tmRNA; the nascent peptide is terminated with the 'tag peptide' encoded by the tmRNA and targeted for degradation. The ribosome is freed to recommence translation, which seems to be the essential function of trans-translation. The chain is SsrA-binding protein from Shouchella clausii (strain KSM-K16) (Alkalihalobacillus clausii).